We begin with the raw amino-acid sequence, 425 residues long: MKTVIKNGTVYQNGRLIHADVLIEDQKIKVIGTNLTGDKEFDATGKLVAPGLVDVHVHYREPGQTYKEDIRTGSEAAARGGFTTVGAMPNVTPVPNTPELMEKMVKKNQEKGIVHIFQYGPITNDETTDIIPDYAALKKAGAFALSNDGHGVQTAQTMYLAMQKAKANNLIIATHAQDDSLFNHGIVNEGKKAEELNLPPVTELAETTQIARDLLLAQKTGVHYHICHVSTKTSVELVRMAKARGINVTCEVAPHHILLTDDDIPKDNGYYKMNPPLRNKEDQAALLVGLLDGTIDLIATDHAPHAKKEKQGGMKGAAFGITGSETAFSTLYTKFVKKDKVFTLEQLLSWLSDKPAEAFGLKDAGVLEPGKNADIAIFDIEHEATIEEKDYKSKGVNTPFTGQKVYGETVMTMVNGKVVYQRGTK.

Zn(2+)-binding residues include histidine 56 and histidine 58. Substrate is bound by residues 58-60 and asparagine 90; that span reads HYR. Zn(2+) is bound by residues aspartate 148, histidine 175, and histidine 228. Asparagine 274 serves as a coordination point for substrate. Aspartate 301 is a binding site for Zn(2+). The active site involves aspartate 301. Substrate contacts are provided by residues histidine 305 and 319–320; that span reads FG.

This sequence belongs to the metallo-dependent hydrolases superfamily. DHOase family. Class I DHOase subfamily. Zn(2+) serves as cofactor.

The catalysed reaction is (S)-dihydroorotate + H2O = N-carbamoyl-L-aspartate + H(+). It participates in pyrimidine metabolism; UMP biosynthesis via de novo pathway; (S)-dihydroorotate from bicarbonate: step 3/3. In terms of biological role, catalyzes the reversible cyclization of carbamoyl aspartate to dihydroorotate. This chain is Dihydroorotase, found in Lactobacillus acidophilus (strain ATCC 700396 / NCK56 / N2 / NCFM).